The primary structure comprises 424 residues: Geranylgeranyl pyrophosphate synthase D (424 aa).

Residues 42-73 (PSATWPSVPKVHKRNRSTSLSDQQTAKKAHAN) are disordered. Residues 58–67 (STSLSDQQTA) are compositionally biased toward polar residues. The isopentenyl diphosphate site is built by K147, R150, and H179. Mg(2+)-binding residues include D186 and D190. Residue R195 participates in dimethylallyl diphosphate binding. R196 contacts isopentenyl diphosphate. Dimethylallyl diphosphate contacts are provided by K274, T275, Q311, K328, and K338.

It belongs to the FPP/GGPP synthase family. Mg(2+) serves as cofactor.

The protein resides in the cytoplasm. It carries out the reaction isopentenyl diphosphate + dimethylallyl diphosphate = (2E)-geranyl diphosphate + diphosphate. It catalyses the reaction isopentenyl diphosphate + (2E)-geranyl diphosphate = (2E,6E)-farnesyl diphosphate + diphosphate. The enzyme catalyses isopentenyl diphosphate + (2E,6E)-farnesyl diphosphate = (2E,6E,10E)-geranylgeranyl diphosphate + diphosphate. It participates in isoprenoid biosynthesis; farnesyl diphosphate biosynthesis; farnesyl diphosphate from geranyl diphosphate and isopentenyl diphosphate: step 1/1. It functions in the pathway isoprenoid biosynthesis; geranyl diphosphate biosynthesis; geranyl diphosphate from dimethylallyl diphosphate and isopentenyl diphosphate: step 1/1. The protein operates within isoprenoid biosynthesis; geranylgeranyl diphosphate biosynthesis; geranylgeranyl diphosphate from farnesyl diphosphate and isopentenyl diphosphate: step 1/1. Functionally, catalyzes the trans-addition of the 3 molecules of isopentenyl diphosphate (IPP) onto dimethylallyl diphosphate (DMAPP) to form geranylgeranyl pyrophosphate (GGDP). This Phomopsis amygdali (Fusicoccum amygdali) protein is Geranylgeranyl pyrophosphate synthase D (GGS-D).